The primary structure comprises 248 residues: Probable transcriptional regulatory protein RPD_4171 (248 aa).

The disordered stretch occupies residues 1-22 (MAGHSQFKNIMHRKGKQDAQRS).

Belongs to the TACO1 family.

It localises to the cytoplasm. The polypeptide is Probable transcriptional regulatory protein RPD_4171 (Rhodopseudomonas palustris (strain BisB5)).